Consider the following 105-residue polypeptide: Thioredoxin-like protein slr0233 (105 aa).

Residues 1 to 102 (MAVKKQFANF…QAAQLIQQLQ (102 aa)) enclose the Thioredoxin domain. A disulfide bridge links cysteine 30 with cysteine 33.

This sequence belongs to the thioredoxin family.

In Synechocystis sp. (strain ATCC 27184 / PCC 6803 / Kazusa), this protein is Thioredoxin-like protein slr0233.